Consider the following 205-residue polypeptide: Proteasome subunit beta type-3 (205 aa).

Belongs to the peptidase T1B family. The 26S proteasome consists of a 20S proteasome core and two 19S regulatory subunits. The 20S proteasome core is composed of 28 subunits that are arranged in four stacked rings, resulting in a barrel-shaped structure. The two end rings are each formed by seven alpha subunits, and the two central rings are each formed by seven beta subunits. The catalytic chamber with the active sites is on the inside of the barrel.

The protein resides in the cytoplasm. Its subcellular location is the nucleus. Its function is as follows. Non-catalytic component of the proteasome, a multicatalytic proteinase complex which is characterized by its ability to cleave peptides with Arg, Phe, Tyr, Leu, and Glu adjacent to the leaving group at neutral or slightly basic pH. The proteasome has an ATP-dependent proteolytic activity. The sequence is that of Proteasome subunit beta type-3 (PSB3) from Trypanosoma brucei brucei.